The following is a 1141-amino-acid chain: Isoleucine--tRNA ligase, cytoplasmic (1141 aa).

Residues 50–60 (PFATGLPHYGH) carry the 'HIGH' region motif. The 'KMSKS' region signature appears at 601 to 605 (KMSKS). Lys-604 contacts ATP.

It belongs to the class-I aminoacyl-tRNA synthetase family.

It localises to the cytoplasm. It catalyses the reaction tRNA(Ile) + L-isoleucine + ATP = L-isoleucyl-tRNA(Ile) + AMP + diphosphate. This is Isoleucine--tRNA ligase, cytoplasmic from Caenorhabditis elegans.